Here is a 307-residue protein sequence, read N- to C-terminus: Taste receptor type 2 member 10 (307 aa).

Topologically, residues 1–6 (MLRVVE) are extracellular. A helical transmembrane segment spans residues 7–27 (GIFIFVVISESVFGVLGNGFI). Over 28-42 (GLVNCIDCAKNKLST) the chain is Cytoplasmic. A helical membrane pass occupies residues 43–63 (IGFILTGLAISRIFLIWIIIT). Over 64–100 (DGFIQIFSPNIYASSNLIEYISYFWVIGNQSSMWFAT) the chain is Extracellular. Residues 101-121 (SLSIFYFLKIANFSNYIFLWL) traverse the membrane as a helical segment. The Cytoplasmic portion of the chain corresponds to 122–126 (KSRTN). The helical transmembrane segment at 127–147 (MVLPFMIVFLLISSLLNFAYI) threads the bilayer. Topologically, residues 148–179 (AKILNDYKMKNDTVWDLNMYKSEYFIKQILLN) are extracellular. Asn-158 is a glycosylation site (N-linked (GlcNAc...) asparagine). The helical transmembrane segment at 180–200 (LGVIFFFTLSLITCVLLIISL) threads the bilayer. The Cytoplasmic segment spans residues 201-227 (WRHNRQMQSNVTGLRDSNTEAHVKAMK). Residues 228-248 (VLISFIILFILYFIGMAIEIS) form a helical membrane-spanning segment. At 249–257 (YFTVRENKL) the chain is on the extracellular side. A helical membrane pass occupies residues 258–278 (LLMFGMTTTAIYPWGHSFILI). Over 279–307 (LGNSKLKQASLRVLQQLKCCEKRKNLRVT) the chain is Cytoplasmic.

This sequence belongs to the G-protein coupled receptor T2R family.

The protein localises to the membrane. In terms of biological role, receptor that may play a role in the perception of bitterness and is gustducin-linked. May play a role in sensing the chemical composition of the gastrointestinal content. The activity of this receptor may stimulate alpha gustducin, mediate PLC-beta-2 activation and lead to the gating of TRPM5. The chain is Taste receptor type 2 member 10 (TAS2R10) from Pan paniscus (Pygmy chimpanzee).